A 451-amino-acid polypeptide reads, in one-letter code: uncharacterized protein (451 aa).

5 helical membrane-spanning segments follow: residues 11–31 (VLLK…YIDL), 56–76 (IQIY…SIGT), 151–171 (IIGI…NIYL), 175–195 (FWLI…LIIF), and 207–227 (VYSV…TIKI). Positions 250–300 (TKSNNNNNNNNNNKQDDNIIYDTDSSFNGQSSSSSSSSSSSSSSSSSATTT) are disordered. Composition is skewed to low complexity over residues 253 to 262 (NNNNNNNNNN) and 280 to 300 (SSSS…ATTT). 2 helical membrane passes run 392–412 (FVGV…SDYS) and 413–433 (LLTI…LTYL).

It localises to the membrane. This is an uncharacterized protein from Dictyostelium discoideum (Social amoeba).